A 410-amino-acid polypeptide reads, in one-letter code: DNA primase small subunit (410 aa).

Residues glutamate 43, aspartate 106, and aspartate 108 contribute to the active site. The Zinc knuckle motif motif lies at 118–129 (CCKDATVCPKCW).

This sequence belongs to the eukaryotic-type primase small subunit family. Heterodimer of a small subunit and a large subunit.

DNA primase is the polymerase that synthesizes small RNA primers for the Okazaki fragments made during discontinuous DNA replication. The polypeptide is DNA primase small subunit (pri-1) (Caenorhabditis elegans).